An 807-amino-acid polypeptide reads, in one-letter code: Glycerol-3-phosphate acyltransferase (807 aa).

Positions 308–313 (CHRSHM) match the HXXXXD motif motif.

Belongs to the GPAT/DAPAT family.

It is found in the cell inner membrane. It catalyses the reaction sn-glycerol 3-phosphate + an acyl-CoA = a 1-acyl-sn-glycero-3-phosphate + CoA. It functions in the pathway phospholipid metabolism; CDP-diacylglycerol biosynthesis; CDP-diacylglycerol from sn-glycerol 3-phosphate: step 1/3. In Shewanella woodyi (strain ATCC 51908 / MS32), this protein is Glycerol-3-phosphate acyltransferase.